A 350-amino-acid chain; its full sequence is Hydroxymethylglutaryl-CoA synthase (350 aa).

Aspartate 33 and valine 34 together coordinate (3S)-3-hydroxy-3-methylglutaryl-CoA. Glutamate 85 acts as the Proton donor/acceptor in catalysis. Residues cysteine 117 and threonine 158 each contribute to the (3S)-3-hydroxy-3-methylglutaryl-CoA site. Cysteine 117 (acyl-thioester intermediate) is an active-site residue. Arginine 204 contacts CoA. (3S)-3-hydroxy-3-methylglutaryl-CoA contacts are provided by threonine 206 and histidine 239. Histidine 239 serves as the catalytic Proton donor/acceptor. Lysine 244 provides a ligand contact to CoA. (3S)-3-hydroxy-3-methylglutaryl-CoA is bound by residues lysine 248, asparagine 271, and serine 301.

This sequence belongs to the thiolase-like superfamily. Archaeal HMG-CoA synthase family. In terms of assembly, interacts with acetoacetyl-CoA thiolase that catalyzes the precedent step in the pathway and with a DUF35 protein. The acetoacetyl-CoA thiolase/HMG-CoA synthase complex channels the intermediate via a fused CoA-binding site, which allows for efficient coupling of the endergonic thiolase reaction with the exergonic HMGCS reaction.

It catalyses the reaction acetoacetyl-CoA + acetyl-CoA + H2O = (3S)-3-hydroxy-3-methylglutaryl-CoA + CoA + H(+). Its pathway is metabolic intermediate biosynthesis; (R)-mevalonate biosynthesis; (R)-mevalonate from acetyl-CoA: step 2/3. Functionally, catalyzes the condensation of acetyl-CoA with acetoacetyl-CoA to form 3-hydroxy-3-methylglutaryl-CoA (HMG-CoA). Functions in the mevalonate (MVA) pathway leading to isopentenyl diphosphate (IPP), a key precursor for the biosynthesis of isoprenoid compounds that are building blocks of archaeal membrane lipids. This chain is Hydroxymethylglutaryl-CoA synthase, found in Methanopyrus kandleri (strain AV19 / DSM 6324 / JCM 9639 / NBRC 100938).